Reading from the N-terminus, the 361-residue chain is Phospho-N-acetylmuramoyl-pentapeptide-transferase (361 aa).

10 helical membrane-spanning segments follow: residues 28–48, 74–94, 99–119, 133–153, 168–188, 203–223, 236–256, 263–283, 288–308, and 338–358; these read LAII…IKFL, TMGG…LADL, IWIT…DDYA, SKLL…EYLD, LSLD…VGSS, VPIA…GNLI, TGEL…FLWF, VFMG…ISVI, IVLA…ILQV, and KVVI…LSSL.

The protein belongs to the glycosyltransferase 4 family. MraY subfamily. It depends on Mg(2+) as a cofactor.

It localises to the cell membrane. The catalysed reaction is UDP-N-acetyl-alpha-D-muramoyl-L-alanyl-gamma-D-glutamyl-meso-2,6-diaminopimeloyl-D-alanyl-D-alanine + di-trans,octa-cis-undecaprenyl phosphate = di-trans,octa-cis-undecaprenyl diphospho-N-acetyl-alpha-D-muramoyl-L-alanyl-D-glutamyl-meso-2,6-diaminopimeloyl-D-alanyl-D-alanine + UMP. It participates in cell wall biogenesis; peptidoglycan biosynthesis. Catalyzes the initial step of the lipid cycle reactions in the biosynthesis of the cell wall peptidoglycan: transfers peptidoglycan precursor phospho-MurNAc-pentapeptide from UDP-MurNAc-pentapeptide onto the lipid carrier undecaprenyl phosphate, yielding undecaprenyl-pyrophosphoryl-MurNAc-pentapeptide, known as lipid I. In Rickettsia montanensis, this protein is Phospho-N-acetylmuramoyl-pentapeptide-transferase.